We begin with the raw amino-acid sequence, 112 residues long: Cell cycle protein GpsB (112 aa).

Residues 32 to 75 (LDDIIKDYETYISTIEELRQENTRLKEEVKQAKKRQEAAQTTVS) adopt a coiled-coil conformation.

This sequence belongs to the GpsB family. In terms of assembly, forms polymers through the coiled coil domains. Interacts with PBP1, MreC and EzrA.

The protein resides in the cytoplasm. Divisome component that associates with the complex late in its assembly, after the Z-ring is formed, and is dependent on DivIC and PBP2B for its recruitment to the divisome. Together with EzrA, is a key component of the system that regulates PBP1 localization during cell cycle progression. Its main role could be the removal of PBP1 from the cell pole after pole maturation is completed. Also contributes to the recruitment of PBP1 to the division complex. Not essential for septum formation. The protein is Cell cycle protein GpsB of Streptococcus mutans serotype c (strain ATCC 700610 / UA159).